The following is a 343-amino-acid chain: Protein RecA (343 aa).

It belongs to the RecA family.

The protein resides in the cytoplasm. Can catalyze the hydrolysis of ATP in the presence of single-stranded DNA, the ATP-dependent uptake of single-stranded DNA by duplex DNA, and the ATP-dependent hybridization of homologous single-stranded DNAs. It interacts with LexA causing its activation and leading to its autocatalytic cleavage. The sequence is that of Protein RecA from Coxiella burnetii (strain RSA 493 / Nine Mile phase I).